The chain runs to 193 residues: Achaete-scute homolog 2 (193 aa).

Disordered stretches follow at residues 1 to 27 (MDGG…RRPA), 37 to 56 (RRRP…ARRN), and 118 to 177 (GGLR…GALS). The 53-residue stretch at 50–102 (AAVARRNERERNRVKLVNLGFQALRQHVPHGGASKKLSKVETLRSAVEYIRAL) folds into the bHLH domain. A compositionally biased stretch (low complexity) spans 140-150 (AASPSRASSSP).

As to quaternary structure, efficient DNA binding requires dimerization with another basic helix-loop-helix (bHLH) protein. Forms heterodimers with bHLH transcription factor TCF3. May not heterodimerise with bHLH protein HAND1. In terms of tissue distribution, expressed in the placenta at a stage between the first and second trimesters and when it matures, at about 32-36 weeks. Expressed in the extravillous trophoblasts, the intermediate trophoblasts, and at lower levels in the cytotrophoblasts and stroma of chorionic villi of the developing placenta. Expressed in follicular T-helper (Tfh) cells.

The protein localises to the nucleus. Transcription factor. Binds to E-box motifs 5'-CANNTG-3' in the regulatory elements of target genes, probably as a heterodimer with another basic helix-loop-helix (bHLH) protein such as the transcription factor TCF3. May bind both open and closed chromatin, acting as a pioneer transcription factor to allow other factors to bind and activate lineage-specific genes. Required during post-implantation development for the generation of some differentiated trophoblast cell types. Transcriptional activity of ASCL2 may be antagonised in a subset of trophoblast cells by bHLH transcription factor HAND1, perhaps by competing for dimerization with other bHLH proteins. Involved in differentiation and function of follicular T-helper (Tfh) cells, thereby playing a role in germinal center responses; probably modulates expression of genes involved in Tfh cell function, such as BCL6. May also act as a suppressor of Th1-, Th2- and Th17-cell differentiation. Induces the formation of stem cells in intestinal crypts in vitro, synergistically activating transcription of target genes, such as SOX9, together with TCF4/beta-catenin. May form a bistable transcriptional switch, controlling expression of its own gene together with Wnt/R-spondin signaling, and thereby maintaining stem cell characteristics. Modulates expression of target genes, including perhaps down-regulating EGR1/Krox24 and chemokine CXCL10/Mob-1 and up-regulating CXCR4 and CDKN1C/p57kip2, in Schwann cells. May play a role in reducing proliferation of Schwann cells, perhaps acting via modulation of expression of CDKN1C. May be dispensable for blastocyst formation and later embryonic function. May be involved in the determination of neuronal precursors. This chain is Achaete-scute homolog 2 (ASCL2), found in Homo sapiens (Human).